A 126-amino-acid polypeptide reads, in one-letter code: Large ribosomal subunit protein uL22 (126 aa).

The protein belongs to the universal ribosomal protein uL22 family. Part of the 50S ribosomal subunit.

This protein binds specifically to 23S rRNA; its binding is stimulated by other ribosomal proteins, e.g. L4, L17, and L20. It is important during the early stages of 50S assembly. It makes multiple contacts with different domains of the 23S rRNA in the assembled 50S subunit and ribosome. Functionally, the globular domain of the protein is located near the polypeptide exit tunnel on the outside of the subunit, while an extended beta-hairpin is found that lines the wall of the exit tunnel in the center of the 70S ribosome. This is Large ribosomal subunit protein uL22 from Sphingopyxis alaskensis (strain DSM 13593 / LMG 18877 / RB2256) (Sphingomonas alaskensis).